We begin with the raw amino-acid sequence, 575 residues long: Potassium-transporting ATPase potassium-binding subunit (575 aa).

The next 12 membrane-spanning stretches (helical) occupy residues 3 to 23, 69 to 89, 136 to 156, 178 to 198, 266 to 286, 293 to 313, 340 to 360, 367 to 387, 391 to 411, 431 to 451, 498 to 518, and 543 to 563; these read FEGV…VPFF, AVLA…LLQG, CFQF…IAFI, ILMP…VPQS, LLEI…FGVL, GWVL…VAAL, FGWA…TGAV, LTPL…IWGG, GIAY…LMVG, IIFL…LAIP, VVLL…AGGL, and AGTI…LGPI.

It belongs to the KdpA family. The system is composed of three essential subunits: KdpA, KdpB and KdpC.

It localises to the cell inner membrane. Functionally, part of the high-affinity ATP-driven potassium transport (or Kdp) system, which catalyzes the hydrolysis of ATP coupled with the electrogenic transport of potassium into the cytoplasm. This subunit binds the periplasmic potassium ions and delivers the ions to the membrane domain of KdpB through an intramembrane tunnel. This is Potassium-transporting ATPase potassium-binding subunit from Gloeobacter violaceus (strain ATCC 29082 / PCC 7421).